A 782-amino-acid polypeptide reads, in one-letter code: LPS-assembly protein LptD (782 aa).

Positions 1–24 (MKKNSYTRLSIAILSTLYSVSSLA) are cleaved as a signal peptide.

This sequence belongs to the LptD family. In terms of assembly, component of the lipopolysaccharide transport and assembly complex. Interacts with LptE and LptA.

Its subcellular location is the cell outer membrane. Functionally, together with LptE, is involved in the assembly of lipopolysaccharide (LPS) at the surface of the outer membrane. The protein is LPS-assembly protein LptD of Pasteurella multocida (strain Pm70).